Consider the following 83-residue polypeptide: uncharacterized protein (83 aa).

The chain crosses the membrane as a helical span at residues 50-70 (IMVFLGEAWIILIPFAIFCII).

It belongs to the plectrovirus ORF7 family.

The protein localises to the host membrane. This is an uncharacterized protein from Spiroplasma citri (SpV1).